Consider the following 294-residue polypeptide: Protoheme IX farnesyltransferase (294 aa).

A run of 8 helical transmembrane segments spans residues 19–39 (PKQT…AGGM), 41–61 (LDAL…TTSV), 89–109 (VEAL…SYLI), 111–131 (PWTA…YTMW), 138–158 (LSII…WAAA), 166–186 (AIMI…YISI), 218–238 (VLMI…PIFL), and 272–292 (SPVE…RILW).

Belongs to the UbiA prenyltransferase family. Protoheme IX farnesyltransferase subfamily.

It is found in the cell membrane. The catalysed reaction is heme b + (2E,6E)-farnesyl diphosphate + H2O = Fe(II)-heme o + diphosphate. It functions in the pathway porphyrin-containing compound metabolism; heme O biosynthesis; heme O from protoheme: step 1/1. Its function is as follows. Converts heme B (protoheme IX) to heme O by substitution of the vinyl group on carbon 2 of heme B porphyrin ring with a hydroxyethyl farnesyl side group. The protein is Protoheme IX farnesyltransferase of Korarchaeum cryptofilum (strain OPF8).